A 392-amino-acid chain; its full sequence is CCA-adding enzyme (392 aa).

2 residues coordinate ATP: Ser-45 and Lys-48. Residues Ser-45 and Lys-48 each coordinate CTP. Mg(2+) contacts are provided by Asp-55, Asp-57, and Glu-106. Residues His-129, Lys-148, and Tyr-157 each coordinate ATP. Positions 129, 148, and 157 each coordinate CTP.

This sequence belongs to the tRNA nucleotidyltransferase/poly(A) polymerase family. Archaeal CCA-adding enzyme subfamily. As to quaternary structure, homodimer. The cofactor is Mg(2+).

The enzyme catalyses a tRNA precursor + 2 CTP + ATP = a tRNA with a 3' CCA end + 3 diphosphate. The catalysed reaction is a tRNA with a 3' CCA end + 2 CTP + ATP = a tRNA with a 3' CCACCA end + 3 diphosphate. In terms of biological role, catalyzes the addition and repair of the essential 3'-terminal CCA sequence in tRNAs without using a nucleic acid template. Adds these three nucleotides in the order of C, C, and A to the tRNA nucleotide-73, using CTP and ATP as substrates and producing inorganic pyrophosphate. tRNA 3'-terminal CCA addition is required both for tRNA processing and repair. Also involved in tRNA surveillance by mediating tandem CCA addition to generate a CCACCA at the 3' terminus of unstable tRNAs. While stable tRNAs receive only 3'-terminal CCA, unstable tRNAs are marked with CCACCA and rapidly degraded. The sequence is that of CCA-adding enzyme from Nanoarchaeum equitans (strain Kin4-M).